The sequence spans 165 residues: Nucleotide-binding protein SYNW1816 (165 aa).

The protein belongs to the YajQ family.

Functionally, nucleotide-binding protein. This Parasynechococcus marenigrum (strain WH8102) protein is Nucleotide-binding protein SYNW1816.